Consider the following 234-residue polypeptide: Phosphoribosylformylglycinamidine synthase subunit PurQ (234 aa).

Residues 5–234 (TVGIVVFPGS…ESLFAHLAGA (230 aa)) form the Glutamine amidotransferase type-1 domain. The Nucleophile role is filled by C89. Catalysis depends on residues H206 and E208.

Part of the FGAM synthase complex composed of 1 PurL, 1 PurQ and 2 PurS subunits.

It localises to the cytoplasm. The catalysed reaction is N(2)-formyl-N(1)-(5-phospho-beta-D-ribosyl)glycinamide + L-glutamine + ATP + H2O = 2-formamido-N(1)-(5-O-phospho-beta-D-ribosyl)acetamidine + L-glutamate + ADP + phosphate + H(+). The enzyme catalyses L-glutamine + H2O = L-glutamate + NH4(+). It participates in purine metabolism; IMP biosynthesis via de novo pathway; 5-amino-1-(5-phospho-D-ribosyl)imidazole from N(2)-formyl-N(1)-(5-phospho-D-ribosyl)glycinamide: step 1/2. Part of the phosphoribosylformylglycinamidine synthase complex involved in the purines biosynthetic pathway. Catalyzes the ATP-dependent conversion of formylglycinamide ribonucleotide (FGAR) and glutamine to yield formylglycinamidine ribonucleotide (FGAM) and glutamate. The FGAM synthase complex is composed of three subunits. PurQ produces an ammonia molecule by converting glutamine to glutamate. PurL transfers the ammonia molecule to FGAR to form FGAM in an ATP-dependent manner. PurS interacts with PurQ and PurL and is thought to assist in the transfer of the ammonia molecule from PurQ to PurL. In Chlorobaculum tepidum (strain ATCC 49652 / DSM 12025 / NBRC 103806 / TLS) (Chlorobium tepidum), this protein is Phosphoribosylformylglycinamidine synthase subunit PurQ.